The following is a 105-amino-acid chain: Large ribosomal subunit protein eL30 (105 aa).

It belongs to the eukaryotic ribosomal protein eL30 family.

The polypeptide is Large ribosomal subunit protein eL30 (rpl30e) (Methanococcus vannielii (strain ATCC 35089 / DSM 1224 / JCM 13029 / OCM 148 / SB)).